The primary structure comprises 3841 residues: Transformation/transcription domain-associated protein (3841 aa).

Disordered regions lie at residues 491–516 (TPTV…PPAT) and 2002–2027 (QQPE…MKRG). Over residues 498–515 (ALPPPAPPTPVTPAPPPA) the composition is skewed to pro residues. The Bipartite nuclear localization signal signature appears at 2025–2040 (KRGMSVDSAQDVKRFR). One can recognise an FAT domain in the interval 2671–3239 (VLKYLGKTHN…YFPIRTLYLT (569 aa)). A disordered region spans residues 3249-3271 (KSDSGQQQPSSAAAQTHSASDPG). Residues 3251–3268 (DSGQQQPSSAAAQTHSAS) are compositionally biased toward low complexity. The PI3K/PI4K catalytic domain occupies 3482-3805 (MPRVEIVQKH…AVTAIMTRLH (324 aa)). A G-loop region spans residues 3488–3494 (VQKHNTA). A catalytic loop region spans residues 3669–3677 (HLNRLNPEM). The tract at residues 3689-3714 (VSYFRFDINDATGDLDANRPVPFRLT) is activation loop. In terms of domain architecture, FATC spans 3809 to 3841 (QFEGGESKVNTLVAAANSLDNLCRMDPAWHPWL).

The protein belongs to the PI3/PI4-kinase family. TRA1 subfamily.

It is found in the nucleus. In terms of biological role, adapter protein, which is found in various multiprotein chromatin complexes with histone acetyltransferase activity (HAT), which gives a specific tag for epigenetic transcription activation. May be required for the mitotic checkpoint and normal cell cycle progression. May play a role in the formation and maintenance of the auditory system. The sequence is that of Transformation/transcription domain-associated protein from Danio rerio (Zebrafish).